A 258-amino-acid chain; its full sequence is Chymotrypsin-2 (258 aa).

The first 17 residues, 1-17 (MLRKVFAVVSVLLVVSA), serve as a signal peptide directing secretion. Positions 18–32 (AKVTKLVLDDHYVNR) are cleaved as a propeptide — activation peptide. Residues 33–255 (VVGGEVAKNG…YHEWVRTTMA (223 aa)) form the Peptidase S1 domain. Residues Cys59 and Cys75 are joined by a disulfide bond. Active-site charge relay system residues include His74 and Asp119. Disulfide bonds link Cys182-Cys198 and Cys208-Cys232. The active-site Charge relay system is Ser212.

It belongs to the peptidase S1 family. As to expression, after blood feeding, expression is induced in the midgut epithelium, followed by secretion into the midgut lumen.

It is found in the secreted. It catalyses the reaction Preferential cleavage: Tyr-|-Xaa, Trp-|-Xaa, Phe-|-Xaa, Leu-|-Xaa.. The polypeptide is Chymotrypsin-2 (CHYM2) (Anopheles gambiae (African malaria mosquito)).